The primary structure comprises 123 residues: uncharacterized protein (123 aa).

A signal peptide spans 1–25 (MKHGIKALLITLSLACAGMSHSALA). A compositionally biased stretch (low complexity) spans 40 to 53 (EAPAAQSKAAVPAK). The interval 40–62 (EAPAAQSKAAVPAKASDEEGTRV) is disordered. 2 consecutive HhH domains span residues 60–90 (TRVS…IVSY) and 91–120 (REEY…NLAV).

This is an uncharacterized protein from Escherichia coli (strain K12).